The following is a 448-amino-acid chain: NK1 transcription factor-related protein 1 (448 aa).

Residues 1 to 13 show a composition bias toward low complexity; sequence MSASGPEAPGDIP. Disordered stretches follow at residues 1–80, 115–299, and 350–397; these read MSAS…LRPT, ASAP…PRRA, and KWKK…GAPL. Over residues 14–30 the composition is skewed to pro residues; sequence ALPPPPQPGSGPAPPAP. Composition is skewed to low complexity over residues 62–79 and 115–129; these read PAAP…PLRP and ASAP…SGRP. Basic and acidic residues predominate over residues 130 to 139; it reads PRAEELERRA. Residues 186–203 are compositionally biased toward acidic residues; sequence SGDEVPDDEDDDEDEAPE. A compositionally biased stretch (basic and acidic residues) spans 205–214; the sequence is EAARGAEEAR. 2 stretches are compositionally biased toward gly residues: residues 215-227 and 259-270; these read GGGG…GSGC and PPGGAAAPGGAG. Low complexity predominate over residues 271-280; it reads TTPQGTATAA. Positions 296 to 355 form a DNA-binding region, homeobox; the sequence is PRRARTAFTYEQLVALENKFKATRYLSVCERLNLALSLSLTETQVKIWFQNRRTKWKKQN. A compositionally biased stretch (gly residues) spans 364–382; it reads TGGGGGPGPGAGPGTGLPG.

Belongs to the NK-1 homeobox family. As to expression, expressed in hemopoietic progenitor cells.

The protein resides in the nucleus. Its function is as follows. May be required for the coordinated crosstalk of factors involved in the maintenance of energy homeostasis, possibly by regulating the transcription of specific factors involved in energy balance. The sequence is that of NK1 transcription factor-related protein 1 from Homo sapiens (Human).